Reading from the N-terminus, the 339-residue chain is Fructose-1,6-bisphosphatase, cytosolic (339 aa).

Residues E70, E99, D120, L122, and D123 each contribute to the Mg(2+) site. Residues 123-126 (DGSS), N214, Y246, Y266, and K276 contribute to the substrate site. Residue E282 coordinates Mg(2+).

This sequence belongs to the FBPase class 1 family. Requires Mg(2+) as cofactor.

The protein localises to the cytoplasm. It catalyses the reaction beta-D-fructose 1,6-bisphosphate + H2O = beta-D-fructose 6-phosphate + phosphate. The chain is Fructose-1,6-bisphosphatase, cytosolic from Brassica napus (Rape).